Consider the following 467-residue polypeptide: Protection of telomeres protein 1a (467 aa).

It belongs to the telombin family. As to quaternary structure, component of the telomerase holoenzyme complex at least composed of TERT, CBF5 and POT1a. The RNA molecule associated to the telomerase complex, and providing a template for telomeric DNA synthesis, is most likely TR and not TER1 as described previously. Interacts with the N-terminal part of TERT. Interacts with CBF5. Interacts with CTC1 and STN1. Does not interact with TEN1. Expressed in roots, rosette leaves, cauline leaves, stems and flowers.

The protein resides in the nucleus. Its subcellular location is the chromosome. It is found in the telomere. The protein localises to the nucleolus. It localises to the cytoplasm. Its function is as follows. Component of the telomerase ribonucleoprotein (RNP) complex that is essential for the positive regulation of telomere length. Binds RNA non-specifically. Binds specifically single-stranded telomeric DNA. Not required to recruit telomerase to telomeres, but stimulates TER1 RNP repeat addition processivity. This chain is Protection of telomeres protein 1a, found in Arabidopsis thaliana (Mouse-ear cress).